We begin with the raw amino-acid sequence, 276 residues long: N-acyl homoserine lactonase AiiB (276 aa).

Zn(2+) is bound by residues His-111, His-113, His-116, His-191, Asp-213, and His-259.

This sequence belongs to the metallo-beta-lactamase superfamily. The cofactor is Zn(2+).

It carries out the reaction an N-acyl-L-homoserine lactone + H2O = an N-acyl-L-homoserine + H(+). The polypeptide is N-acyl homoserine lactonase AiiB (Rhizobium rhizogenes (strain K84 / ATCC BAA-868) (Agrobacterium radiobacter)).